Here is a 326-residue protein sequence, read N- to C-terminus: Putative ribose-phosphate pyrophosphokinase 2 (326 aa).

ATP contacts are provided by residues Asp43–Glu45 and Arg102–Gln103. His136 lines the Mg(2+) pocket. Residues Asp225 and Asn229 to Thr233 contribute to the D-ribose 5-phosphate site.

Homohexamer. Mg(2+) is required as a cofactor.

The protein resides in the cytoplasm. It catalyses the reaction D-ribose 5-phosphate + ATP = 5-phospho-alpha-D-ribose 1-diphosphate + AMP + H(+). It functions in the pathway metabolic intermediate biosynthesis; 5-phospho-alpha-D-ribose 1-diphosphate biosynthesis; 5-phospho-alpha-D-ribose 1-diphosphate from D-ribose 5-phosphate (route I): step 1/1. Its function is as follows. Involved in the biosynthesis of the central metabolite phospho-alpha-D-ribosyl-1-pyrophosphate (PRPP) via the transfer of pyrophosphoryl group from ATP to 1-hydroxyl of ribose-5-phosphate (Rib-5-P). The polypeptide is Putative ribose-phosphate pyrophosphokinase 2 (Streptococcus pyogenes serotype M6 (strain ATCC BAA-946 / MGAS10394)).